A 451-amino-acid chain; its full sequence is MGKLQSKHAAAARKRRESPEGDSFVASAYASGRKGAEEAERRARDKQELPNGDPKEGPFREDQCPLQVALPAEKAEGREHPGQLLSADDGERAANREGPRGPGGQRLNIDALQCDVSVEEDDRQEWTFTLYDFDNCGKVTREDMSSLMHTIYEVVDASVNHSSGSSKTLRVKLTVSPEPSSKRKEGPPAGQDREPTRCRMEGELAEEPRVADRRLSAHVRRPSTDPQPCSERGPYCVDENTERRNHYLDLAGIENYTSRFGPGSPPVQAKQEPQGRASHLQARSRSQEPDTHAVHHRRSQVLVEHVVPASEPAARALDTQPRPKGPEKQFLKSPKGSGKPPGVPASSKSGKAFSYYLPAVLPPQAPQDGHHLPQPPPPPYGHKRYRQKGREGHSPLKAPHAQPATVEHEVVRDLPPTPAGEGYAVPVIQRHEHHHHHEHHHHHHHHHFHPS.

A disordered region spans residues 1–108; the sequence is MGKLQSKHAA…PRGPGGQRLN (108 aa). The N-myristoyl glycine moiety is linked to residue G2. Positions 2-173 are targeting to the basolateral cell membrane; it reads GKLQSKHAAA…GSSKTLRVKL (172 aa). 2 stretches are compositionally biased toward basic and acidic residues: residues 34 to 63 and 89 to 99; these read KGAEEAERRARDKQELPNGDPKEGPFREDQ and DGERAANREGP. The interaction with DVL1, DVL2 and DVL3 stretch occupies residues 113-178; sequence QCDVSVEEDD…LRVKLTVSPE (66 aa). One can recognise an EF-hand domain in the interval 119–154; sequence EEDDRQEWTFTLYDFDNCGKVTREDMSSLMHTIYEV. Ca(2+)-binding residues include D132, D134, K138, and D143. 2 disordered regions span residues 162-237 and 256-408; these read SSGS…PYCV and YTSR…TVEH. The span at 180–215 shows a compositional bias: basic and acidic residues; it reads SSKRKEGPPAGQDREPTRCRMEGELAEEPRVADRRL. The segment at 300–385 is interaction with TGFA; that stretch reads QVLVEHVVPA…PPPPYGHKRY (86 aa). Over residues 332–351 the composition is skewed to low complexity; that stretch reads KSPKGSGKPPGVPASSKSGK.

Belongs to the NKD family. Interacts with DVL1, DVL2, DVL3 and PPP2R3A. Interacts with RNF25 and TGFA (via cytoplasmic domain). In terms of processing, ubiquitinated, leading to rapid proteasomal degradation. Interaction with TGFA interferes with RNF25 binding and protects against ubiquitination mediated by RNF25. As to expression, expressed in kidney, lung, pancreas and spleen.

It localises to the cell membrane. It is found in the cytoplasm. The protein localises to the cytoplasmic vesicle. Functionally, cell autonomous antagonist of the canonical Wnt signaling pathway. May activate a second Wnt signaling pathway that controls planar cell polarity. Required for processing of TGFA and for targeting of TGFA to the basolateral membrane of polarized epithelial cells. The protein is Protein naked cuticle homolog 2 (NKD2) of Homo sapiens (Human).